A 396-amino-acid polypeptide reads, in one-letter code: Proton-coupled antiporter flippase LtaA (396 aa).

12 consecutive transmembrane segments (helical) span residues 15–34, 46–73, 80–99, 105–126, 138–159, 165–184, 211–231, 243–264, 276–298, 304–326, 338–358, and 370–390; these read FILM…MYIL, IAVA…GFLL, IVLT…VIWF, VIIF…IMLS, GYVY…NLLI, RFAF…YYFV, LLLF…VPIL, TIEY…MLFL, MYGV…SMIV, WIIA…TFMA, WGVF…FGGL, and FYFS…YFIA.

Belongs to the major facilitator superfamily. LtaA family.

It localises to the cell membrane. It functions in the pathway cell wall biogenesis; lipoteichoic acid biosynthesis. Functionally, proton-coupled antiporter flippase that catalyzes the translocation, from the inner to the outer leaflet of the cell membrane, of the lipid-linked disaccharide (anchor-LLD) that anchors lipoteichoic acids (LTA) to the cell membrane. This chain is Proton-coupled antiporter flippase LtaA (ltaA), found in Staphylococcus aureus (strain MRSA252).